The chain runs to 215 residues: Cytokinin riboside 5'-monophosphate phosphoribohydrolase LOG3 (215 aa).

Substrate contacts are provided by residues E84, 102–103 (RK), 119–125 (GYGTLEE), and T131.

It belongs to the LOG family. As to expression, expressed in roots and shoots. Detected in root procambium, lateral root primordia, vascular tissues of immature leaves, axillary buds, style and ovular funiculus.

The protein resides in the cytoplasm. Its subcellular location is the nucleus. It catalyses the reaction N(6)-(dimethylallyl)adenosine 5'-phosphate + H2O = N(6)-dimethylallyladenine + D-ribose 5-phosphate. The enzyme catalyses 9-ribosyl-trans-zeatin 5'-phosphate + H2O = trans-zeatin + D-ribose 5-phosphate. Its function is as follows. Cytokinin-activating enzyme working in the direct activation pathway. Phosphoribohydrolase that converts inactive cytokinin nucleotides to the biologically active free-base forms. This Arabidopsis thaliana (Mouse-ear cress) protein is Cytokinin riboside 5'-monophosphate phosphoribohydrolase LOG3 (LOG3).